We begin with the raw amino-acid sequence, 205 residues long: MKMNYPIEYYKEKMKFLRDNSERYILPITCLCLTSVVITSCLFAALFVAVRDCKRDSFLEDTTTAITTSSSIATTYRDNLVIHCPRDWISHNGICLLSTGEKVGFRQGIQKCEKLGSDMIGKSEEEMKALKNIWTGNDHSRFWVDNRAAASTFDPVNECAYGTRSSVSEVPKVLTSPCSVRRYLVCKKTDNSYPTTQSSFYNQYE.

Residues 84–187 (CPRDWISHNG…CSVRRYLVCK (104 aa)) enclose the C-type lectin domain.

In Fowlpox virus (strain NVSL) (FPV), this protein is Putative C-type lectin protein FPV001/FPV260.